Consider the following 183-residue polypeptide: uncharacterized protein (183 aa).

The region spanning 55-183 (PRAAVLLVDL…RSRRGSRPAR (129 aa)) is the GGDEF domain.

Its function is as follows. Might be involved in pSAM2 replication control. This is an uncharacterized protein from Streptomyces ambofaciens.